The following is an 81-amino-acid chain: Protein Vpu (81 aa).

Residues Met1–Ile6 are Extracellular-facing. Residues Ala7–Ile27 traverse the membrane as a helical segment. Residues Glu28–Leu81 are Cytoplasmic-facing. Residues Ser52 and Ser56 each carry the phosphoserine; by host CK2 modification.

The protein belongs to the HIV-1 VPU protein family. Homopentamer. Interacts with host CD4 and BRTC; these interactions induce proteasomal degradation of CD4. Interacts with host BST2; this interaction leads to the degradation of host BST2. Interacts with host FBXW11. Interacts with host AP1M1; this interaction plays a role in the mistrafficking and subsequent degradation of host BST2. Interacts with host RANBP2; this interaction allows Vpu to down-regulate host BLM sumoylation. Phosphorylated by host CK2. This phosphorylation is necessary for interaction with human BTRC and degradation of CD4.

The protein localises to the host membrane. Its activity is regulated as follows. Ion channel activity is inhibited by hexamethylene amiloride in vitro. Its function is as follows. Enhances virion budding by targeting host CD4 and Tetherin/BST2 to proteasome degradation. Degradation of CD4 prevents any unwanted premature interactions between viral Env and its host receptor CD4 in the endoplasmic reticulum. Degradation of antiretroviral protein Tetherin/BST2 is important for virion budding, as BST2 tethers new viral particles to the host cell membrane. Mechanistically, Vpu bridges either CD4 or BST2 to BTRC, a substrate recognition subunit of the Skp1/Cullin/F-box protein E3 ubiquitin ligase, induces their ubiquitination and subsequent proteasomal degradation. The alteration of the E3 ligase specificity by Vpu seems to promote the degradation of host IKBKB, leading to NF-kappa-B down-regulation and subsequent apoptosis. Acts as a viroporin that forms an oligomeric ion channel in membranes. Modulates the host DNA repair mechanisms to promote degradation of nuclear viral cDNA in cells that are already productively infected in order to suppress immune sensing and proviral hyper-integration (superinfection). Manipulates PML-NBs and modulates SUMOylation of host BLM protein thereby enhancing its DNA-end processing activity toward viral unintegrated linear DNA. Also inhibits RAD52-mediated homologous repair of viral cDNA, preventing the generation of dead-end circular forms of single copies of the long terminal repeat and permitting sustained nucleolytic attack. This Homo sapiens (Human) protein is Protein Vpu.